We begin with the raw amino-acid sequence, 749 residues long: RNA-binding protein 5-B (749 aa).

The segment at 1 to 88 (MGSDKRVSRS…YHSDGDYMDH (88 aa)) is disordered. An RRM 1 domain is found at 102-182 (KTIMLRGLPI…KTIAMHYSNP (81 aa)). The RanBP2-type zinc-finger motif lies at 185 to 214 (KFEDWLCNKCGLYNFRRRLKCFRCGAAKAE). The region spanning 241-325 (SAIILRNIGP…KTIGVDFAKS (85 aa)) is the RRM 2 domain. 4 disordered regions span residues 425–471 (QMYQ…SVPD), 520–558 (PAAD…AQQI), 570–595 (NKQK…ESAA), and 626–680 (TEEE…NSNI). The segment covering 429-460 (QPGSPTQSGTSTAASTTPASTTSTEEATTPTA) has biased composition (low complexity). Composition is skewed to basic and acidic residues over residues 585–594 (SRDEERKESA) and 627–648 (EEEK…EKYG). The 47-residue stretch at 677–723 (NSNIGNKMLQAMGWKEGSGLGRKSQGITAPIQAQVRMRGAGLGAKGS) folds into the G-patch domain.

The protein belongs to the RBM5/RBM10 family. As to quaternary structure, component of the spliceosome A complex (also known as the prespliceosome). Appears to dissociate from the spliceosome upon formation of the spliceosome B complex (also known as the precatalytic spliceosome), in which the heterotrimeric U4/U6.U5 snRNPs are bound.

Its subcellular location is the nucleus. In terms of biological role, component of the spliceosome A complex. Regulates alternative splicing of a number of mRNAs. May modulate splice site pairing after recruitment of the U1 and U2 snRNPs to the 5' and 3' splice sites of the intron. In Xenopus laevis (African clawed frog), this protein is RNA-binding protein 5-B (rbm5-b).